Consider the following 309-residue polypeptide: Elongation factor Ts (309 aa).

An involved in Mg(2+) ion dislocation from EF-Tu region spans residues 98–101; it reads TDFV.

It belongs to the EF-Ts family.

The protein resides in the cytoplasm. Its function is as follows. Associates with the EF-Tu.GDP complex and induces the exchange of GDP to GTP. It remains bound to the aminoacyl-tRNA.EF-Tu.GTP complex up to the GTP hydrolysis stage on the ribosome. This is Elongation factor Ts from Orientia tsutsugamushi (strain Boryong) (Rickettsia tsutsugamushi).